A 211-amino-acid chain; its full sequence is Sec-independent protein translocase protein TatB (211 aa).

A helical membrane pass occupies residues 1–21 (MFDIGVGELTLIAVVALVVLG). The disordered stretch occupies residues 175 to 211 (AHLTSAPAPPVTVAPVDAGTSASPTPSEPTKIQEKQP). Residues 194 to 204 (TSASPTPSEPT) are compositionally biased toward polar residues.

The protein belongs to the TatB family. In terms of assembly, the Tat system comprises two distinct complexes: a TatABC complex, containing multiple copies of TatA, TatB and TatC subunits, and a separate TatA complex, containing only TatA subunits. Substrates initially bind to the TatABC complex, which probably triggers association of the separate TatA complex to form the active translocon.

It localises to the cell inner membrane. Part of the twin-arginine translocation (Tat) system that transports large folded proteins containing a characteristic twin-arginine motif in their signal peptide across membranes. Together with TatC, TatB is part of a receptor directly interacting with Tat signal peptides. TatB may form an oligomeric binding site that transiently accommodates folded Tat precursor proteins before their translocation. This chain is Sec-independent protein translocase protein TatB, found in Xanthomonas oryzae pv. oryzae (strain MAFF 311018).